We begin with the raw amino-acid sequence, 427 residues long: Tol-Pal system protein TolB (427 aa).

The first 23 residues, 1–23 (MKLLKRLVSVFAIVLAVGSNAFA), serve as a signal peptide directing secretion.

This sequence belongs to the TolB family. In terms of assembly, the Tol-Pal system is composed of five core proteins: the inner membrane proteins TolA, TolQ and TolR, the periplasmic protein TolB and the outer membrane protein Pal. They form a network linking the inner and outer membranes and the peptidoglycan layer.

Its subcellular location is the periplasm. Part of the Tol-Pal system, which plays a role in outer membrane invagination during cell division and is important for maintaining outer membrane integrity. The polypeptide is Tol-Pal system protein TolB (Haemophilus influenzae (strain ATCC 51907 / DSM 11121 / KW20 / Rd)).